Consider the following 648-residue polypeptide: Adhesion G-protein coupled receptor G1 (648 aa).

Positions 1–24 are cleaved as a signal peptide; it reads MKQNPAKTARMWIIICLLFVLGQA. Over 25–370 the chain is Extracellular; it reads TDNDRDFKMC…STVRHLKALT (346 aa). Cysteine 34 and cysteine 96 are disulfide-bonded. 7 N-linked (GlcNAc...) asparagine glycosylation sites follow: asparagine 62, asparagine 91, asparagine 114, asparagine 146, asparagine 222, asparagine 262, and asparagine 286. Cysteine 127 and cysteine 176 form a disulfide bridge. The region spanning 214–361 is the GAIN-B domain; that stretch reads MDEEFTGHNF…AILVQVEQKS (148 aa). Disulfide bonds link cysteine 313–cysteine 343 and cysteine 331–cysteine 345. A GPS region spans residues 313-361; it reads CVSWDTKQDNEVNWKDDGCDTVKINEEQTECHCNHLTYFAILVQVEQKS. A stachel region spans residues 349 to 361; sequence TYFAILVQVEQKS. A helical membrane pass occupies residues 371-391; sequence FITAVGCAVSLVSCLVLFYWL. At 392-408 the chain is on the cytoplasmic side; it reads CKRRRGKKNQISLVHRG. The chain crosses the membrane as a helical span at residues 409–429; the sequence is LVVAIFLLCLFFILTGILANV. Residues 430–443 lie on the Extracellular side of the membrane; sequence ANETVCQLTGSLLH. The N-linked (GlcNAc...) asparagine glycan is linked to asparagine 431. Residues 444 to 464 form a helical membrane-spanning segment; that stretch reads YGLLSTLCWMAMEVFHTFLLV. Over 465–471 the chain is Cytoplasmic; sequence RKVFNSP. A helical transmembrane segment spans residues 472 to 492; the sequence is LPIWIFYLMGFGFPFLLVSIL. At 493-530 the chain is on the extracellular side; that stretch reads LSVGDIYGERKIKPSDDVNNPYRMCWMTEGDKSQLAHY. The helical transmembrane segment at 531 to 551 threads the bilayer; that stretch reads IINIGLLAVVVSSGLVMLFLV. Topologically, residues 552-563 are cytoplasmic; the sequence is VREIRNRPDWKK. Residues 564–586 form a helical membrane-spanning segment; sequence IHVAFLSIWGLTCLYGTTWALGF. The Extracellular segment spans residues 587–595; that stretch reads LDFGPFSEV. A helical membrane pass occupies residues 596–618; the sequence is TLFLFCIINSLQGFFLMLRYYAL. Topologically, residues 619 to 648 are cytoplasmic; it reads ERMKKKDVSSSDGSSSGSSKQHMLQTNEKS.

It belongs to the G-protein coupled receptor 2 family. LN-TM7 subfamily. As to quaternary structure, heterodimer of 2 chains generated by proteolytic processing; the large extracellular N-terminal fragment (ADGRG1 NT) and the membrane-bound C-terminal fragment (ADGRG1-CT) predominantly remain associated and non-covalently linked. Autoproteolytically cleaved into 2 fragments; the large extracellular N-terminal fragment (ADGRG1 NT) and the membrane-bound C-terminal fragment (ADGRG1 CT) predominantly remain associated and non-covalently linked.

The protein resides in the cell membrane. With respect to regulation, forms a heterodimer of 2 chains generated by proteolytic processing that remain associated through non-covalent interactions mediated by the GAIN-B domain. In the inactivated receptor, the Stachel sequence (also named stalk) is embedded in the GAIN-B domain, where it adopts a beta-strand conformation. On activation, the Stachel moves into the 7 transmembrane region and adopts a twisted hook-shaped configuration that forms contacts within the receptor, leading to coupling of a G-alpha protein, which activates signaling. The cleaved GAIN-B and N-terminal domains can then dissociate from the rest of the receptor. Functionally, adhesion G-protein coupled receptor (aGPCR), which is involved in oligodendrocyte development and maintenance of peripheral myelin. Ligand binding causes a conformation change that triggers signaling via guanine nucleotide-binding proteins (G proteins) and modulates the activity of downstream effectors, such as RhoA pathway. Adgrg1 is coupled to G(12) and/or G(13) G proteins (gna12 and gna13, respectively) and mediates the activation Rho small GTPases. Adgrg1-dependent RhoA signaling promotes timely radial sorting of axons. Required to establish proper myelin thickness and facilitate organization of the myelin sheath in the mature peripheral nervous system. In Danio rerio (Zebrafish), this protein is Adhesion G-protein coupled receptor G1.